The sequence spans 193 residues: uncharacterized protein (193 aa).

The next 3 membrane-spanning stretches (helical) occupy residues 5 to 25 (LILL…FIIF), 63 to 83 (IFIL…LINI), and 90 to 110 (ILTF…LTPA).

It is found in the cell membrane. This is an uncharacterized protein from Methanocaldococcus jannaschii (strain ATCC 43067 / DSM 2661 / JAL-1 / JCM 10045 / NBRC 100440) (Methanococcus jannaschii).